The chain runs to 173 residues: Lipoprotein signal peptidase (173 aa).

Helical transmembrane passes span 67-87 (WISL…PHLG) and 92-112 (MGFG…FAFG). Residues D116 and D132 contribute to the active site. The helical transmembrane segment at 125–145 (FPVFNGADIAINLGLACLLIG) threads the bilayer. The interval 151–173 (SRTPAPARPASKQIREPTDTTGG) is disordered. Positions 163–173 (QIREPTDTTGG) are enriched in basic and acidic residues.

This sequence belongs to the peptidase A8 family.

The protein localises to the cell inner membrane. The enzyme catalyses Release of signal peptides from bacterial membrane prolipoproteins. Hydrolyzes -Xaa-Yaa-Zaa-|-(S,diacylglyceryl)Cys-, in which Xaa is hydrophobic (preferably Leu), and Yaa (Ala or Ser) and Zaa (Gly or Ala) have small, neutral side chains.. Its pathway is protein modification; lipoprotein biosynthesis (signal peptide cleavage). In terms of biological role, this protein specifically catalyzes the removal of signal peptides from prolipoproteins. This Gloeobacter violaceus (strain ATCC 29082 / PCC 7421) protein is Lipoprotein signal peptidase.